The chain runs to 214 residues: 3-isopropylmalate dehydratase small subunit (214 aa).

The protein belongs to the LeuD family. LeuD type 1 subfamily. As to quaternary structure, heterodimer of LeuC and LeuD.

It carries out the reaction (2R,3S)-3-isopropylmalate = (2S)-2-isopropylmalate. Its pathway is amino-acid biosynthesis; L-leucine biosynthesis; L-leucine from 3-methyl-2-oxobutanoate: step 2/4. In terms of biological role, catalyzes the isomerization between 2-isopropylmalate and 3-isopropylmalate, via the formation of 2-isopropylmaleate. The protein is 3-isopropylmalate dehydratase small subunit of Methylobacillus flagellatus (strain ATCC 51484 / DSM 6875 / VKM B-1610 / KT).